A 1621-amino-acid chain; its full sequence is ALK tyrosine kinase receptor (1621 aa).

A signal peptide spans 1–18; that stretch reads MGAAGFLWLLPPLLLAAA. At 19–1042 the chain is on the extracellular side; it reads SYSGAATDQR…PHLPLSLILS (1024 aa). Residues 48 to 70 are heparin-binding region; sequence RLQRKSLAVDFVVPSLFRVYARD. N-linked (GlcNAc...) asparagine glycans are attached at residues N174, N248, N289, N328, N415, N428, N449, N567, N575, N631, and N673. In terms of domain architecture, MAM 1 spans 268 to 431; that stretch reads LECSFDFPCE…DFFALKNCSE (164 aa). Residues 441–477 enclose the LDL-receptor class A domain; sequence LQSSFTCWNGTVLQLGQACDFHQDCAQGEDEGQLCSK. The 159-residue stretch at 482 to 640 folds into the MAM 2 domain; it reads FYCNFENGFC…NISISLDCYL (159 aa). C692 and C705 are joined by a disulfide. Residue N713 is glycosylated (N-linked (GlcNAc...) asparagine). C787 and C798 form a disulfide bridge. N-linked (GlcNAc...) asparagine glycans are attached at residues N812, N868, and N890. C910 and C932 are oxidised to a cystine. The N-linked (GlcNAc...) asparagine glycan is linked to N990. Cystine bridges form between C991-C999, C994-C1010, and C1012-C1025. The segment at 991-1029 is EGF-like; sequence CSHCEVDECHMDPESHKVICFCDHGTVLADDGVSCIVSP. The chain crosses the membrane as a helical span at residues 1043 to 1063; that stretch reads VVTSALVAALVLAFSGIMIVY. Topologically, residues 1064-1621 are cytoplasmic; sequence RRKHQELQAM…SKNKVTQPGP (558 aa). Y1082, Y1096, and Y1100 each carry phosphotyrosine. One can recognise a Protein kinase domain in the interval 1120-1396; that stretch reads ITLIRGLGHG…IEYCTQDPDV (277 aa). ATP is bound by residues 1126–1134 and H1128; that span reads LGHGAFGEV. Residue Y1135 is modified to Phosphotyrosine. ATP is bound by residues K1154 and 1201-1203; that span reads ELM. D1253 functions as the Proton acceptor in the catalytic mechanism. An ATP-binding site is contributed by D1274. Residue Y1282 is modified to Phosphotyrosine. The interval 1412–1556 is disordered; it reads EEKVPMRPKD…WTGPGAGPRR (145 aa). The segment covering 1414–1423 has biased composition (basic and acidic residues); the sequence is KVPMRPKDPE. A compositionally biased stretch (low complexity) spans 1441–1461; sequence SAAPQPAALTAPGPSVKKPPG. Positions 1462-1472 are enriched in gly residues; that stretch reads AGAGAGAGAGA. Over residues 1506 to 1518 the composition is skewed to polar residues; the sequence is NKPTSLWNPTYGS. Y1516 carries the post-translational modification Phosphotyrosine. A compositionally biased stretch (gly residues) spans 1543 to 1552; it reads AEGGWTGPGA.

The protein belongs to the protein kinase superfamily. Tyr protein kinase family. Insulin receptor subfamily. In terms of assembly, homodimer; homodimerizes following heparin- and ligand-binding. Interacts with CBL, IRS1, PIK3R1 and PLCG1. Interacts with FRS2 and SHC1. Interacts with PTN and MDK. Post-translationally, phosphorylated at tyrosine residues by autocatalysis, which activates kinase activity. In cells not stimulated by a ligand, receptor protein tyrosine phosphatase beta and zeta complex (PTPRB/PTPRZ1) dephosphorylates ALK at the sites in ALK that are undergoing autophosphorylation through autoactivation. As to expression, mainly expressed in central nervous system (CNS) and other parts of the brain such as the paraventricular nucleus (PVN) of the hypothalamus. Expression is also found in peripheral nervous systems, eye, nasal epithelium, olfactory nerve, tongue, skin, tissue surrounding the esophagus, stomach, midgut, as well as testis and ovary.

The protein resides in the cell membrane. It carries out the reaction L-tyrosyl-[protein] + ATP = O-phospho-L-tyrosyl-[protein] + ADP + H(+). Its activity is regulated as follows. Activated upon ALKAL2 ligand-binding. ALKAL2-driven activation is coupled with heparin-binding. Following ligand-binding, homodimerizes and autophosphorylates, activating its kinase activity. Inactivated through dephosphorylation by receptor protein tyrosine phosphatase beta and zeta complex (PTPRB/PTPRZ1) when there is no stimulation by a ligand. Functionally, neuronal receptor tyrosine kinase that is essentially and transiently expressed in specific regions of the central and peripheral nervous systems and plays an important role in the genesis and differentiation of the nervous system. Also acts as a key thinness protein involved in the resistance to weight gain: in hypothalamic neurons, controls energy expenditure acting as a negative regulator of white adipose tissue lipolysis and sympathetic tone to fine-tune energy homeostasis. Following activation by ALKAL2 ligand at the cell surface, transduces an extracellular signal into an intracellular response. In contrast, ALKAL1 is not a potent physiological ligand for ALK. Ligand-binding to the extracellular domain induces tyrosine kinase activation, leading to activation of the mitogen-activated protein kinase (MAPK) pathway. Phosphorylates almost exclusively at the first tyrosine of the Y-x-x-x-Y-Y motif. Induces tyrosine phosphorylation of CBL, FRS2, IRS1 and SHC1, as well as of the MAP kinases MAPK1/ERK2 and MAPK3/ERK1. ALK activation may also be regulated by pleiotrophin (PTN) and midkine (MDK). PTN-binding induces MAPK pathway activation, which is important for the anti-apoptotic signaling of PTN and regulation of cell proliferation. MDK-binding induces phosphorylation of the ALK target insulin receptor substrate (IRS1), activates mitogen-activated protein kinases (MAPKs) and PI3-kinase, resulting also in cell proliferation induction. Drives NF-kappa-B activation, probably through IRS1 and the activation of the AKT serine/threonine kinase. Recruitment of IRS1 to activated ALK and the activation of NF-kappa-B are essential for the autocrine growth and survival signaling of MDK. This Mus musculus (Mouse) protein is ALK tyrosine kinase receptor.